Here is a 66-residue protein sequence, read N- to C-terminus: Large ribosomal subunit protein bL33c (66 aa).

It belongs to the bacterial ribosomal protein bL33 family.

It is found in the plastid. It localises to the chloroplast. This chain is Large ribosomal subunit protein bL33c, found in Brachypodium distachyon (Purple false brome).